The chain runs to 292 residues: Inositol oxygenase (292 aa).

Substrate-binding positions include Arg33 and 88–90 (DES). Fe cation-binding residues include His101, His128, and Asp129. Substrate contacts are provided by residues Lys132 and 149-150 (GD). Fe cation contacts are provided by His201, His227, and Asp260. Substrate is bound at residue 227–228 (HS).

The protein belongs to the myo-inositol oxygenase family. It depends on Fe cation as a cofactor.

The protein localises to the cytoplasm. It catalyses the reaction myo-inositol + O2 = D-glucuronate + H2O + H(+). Its pathway is polyol metabolism; myo-inositol degradation into D-glucuronate; D-glucuronate from myo-inositol: step 1/1. The protein is Inositol oxygenase (miox) of Dictyostelium discoideum (Social amoeba).